The sequence spans 479 residues: BURP domain-containing protein 4 (479 aa).

Residues 1-46 (MVGKGNECAAARRRFSLRAAAASSSSSSFLPCLLLAAALSAGCCRA) form the signal peptide. The disordered stretch occupies residues 158–177 (RADGPPKQPATFPASPNGEK). The BURP domain maps to 254–479 (LFLMKKLHPG…PQGYVLWLAN (226 aa)). N-linked (GlcNAc...) asparagine glycosylation occurs at Asn-445.

In terms of tissue distribution, expressed in stamen.

The chain is BURP domain-containing protein 4 (BURP4) from Oryza sativa subsp. japonica (Rice).